Here is a 1438-residue protein sequence, read N- to C-terminus: DNA polymerase III PolC-type (1438 aa).

Residues 422–578 (YVVFDVETTG…YDTEATAYMF (157 aa)) enclose the Exonuclease domain.

Belongs to the DNA polymerase type-C family. PolC subfamily.

It localises to the cytoplasm. It catalyses the reaction DNA(n) + a 2'-deoxyribonucleoside 5'-triphosphate = DNA(n+1) + diphosphate. In terms of biological role, required for replicative DNA synthesis. This DNA polymerase also exhibits 3' to 5' exonuclease activity. The polypeptide is DNA polymerase III PolC-type (Staphylococcus saprophyticus subsp. saprophyticus (strain ATCC 15305 / DSM 20229 / NCIMB 8711 / NCTC 7292 / S-41)).